Reading from the N-terminus, the 734-residue chain is DNA replication licensing factor MCM5 (734 aa).

Position 2 is an N-acetylserine (S2). An MCM domain is found at 331–537 (IYELISKSIA…RDVMLAKHVI (207 aa)). R371 contacts ADP. An N6-acetyllysine mark is found at K392 and K396. The Arginine finger motif lies at 512-515 (SRFD). S605 is modified (phosphoserine).

This sequence belongs to the MCM family. Component of the MCM2-7 complex. The complex forms a toroidal hexameric ring with the proposed subunit order MCM2-MCM6-MCM4-MCM7-MCM3-MCM5. Component of the CMG helicase complex, a hexameric ring of related MCM2-7 subunits stabilized by CDC45 and the tetrameric GINS complex. Interacts with ANKRD17. Interacts with MCMBP. Interacts with TONSL; the interaction is direct.

It localises to the nucleus. The protein resides in the chromosome. It is found in the cytoplasm. Its subcellular location is the cytosol. The catalysed reaction is ATP + H2O = ADP + phosphate + H(+). Its function is as follows. Acts as a component of the MCM2-7 complex (MCM complex) which is the replicative helicase essential for 'once per cell cycle' DNA replication initiation and elongation in eukaryotic cells. Core component of CDC45-MCM-GINS (CMG) helicase, the molecular machine that unwinds template DNA during replication, and around which the replisome is built. The active ATPase sites in the MCM2-7 ring are formed through the interaction surfaces of two neighboring subunits such that a critical structure of a conserved arginine finger motif is provided in trans relative to the ATP-binding site of the Walker A box of the adjacent subunit. The six ATPase active sites, however, are likely to contribute differentially to the complex helicase activity. The sequence is that of DNA replication licensing factor MCM5 from Bos taurus (Bovine).